The sequence spans 398 residues: Phosphoglycerate kinase (398 aa).

Residues 23 to 25 (DFN), arginine 38, 61 to 64 (HMGK), arginine 122, and arginine 155 each bind substrate. ATP-binding positions include lysine 206, glycine 297, glutamate 328, and 354-357 (GGDS).

It belongs to the phosphoglycerate kinase family. Monomer.

The protein localises to the cytoplasm. It carries out the reaction (2R)-3-phosphoglycerate + ATP = (2R)-3-phospho-glyceroyl phosphate + ADP. The protein operates within carbohydrate degradation; glycolysis; pyruvate from D-glyceraldehyde 3-phosphate: step 2/5. The polypeptide is Phosphoglycerate kinase (Clostridium botulinum (strain Loch Maree / Type A3)).